A 1730-amino-acid chain; its full sequence is SH3 and multiple ankyrin repeat domains protein 3 (1730 aa).

Positions 1–75 (MDGPGASAVV…KFLDEERLLQ (75 aa)) are intramolecular interaction with the ANK repeats. Residue Tyr-122 is modified to Phosphotyrosine. ANK repeat units follow at residues 148 to 178 (SGEC…HLDF), 182 to 211 (DGLT…SPDY), 215 to 245 (RGLT…QLGT), 249 to 278 (NGWQ…NMGA), 282 to 311 (SGNT…NKDV), and 315 to 345 (NSQT…DVVP). The tract at residues 354-466 (KRRRLAGPSG…PPPRGPKRKL (113 aa)) is disordered. Phosphoserine occurs at positions 373, 375, 387, and 394. The span at 404–415 (LQEEKDRDRDGE) shows a compositional bias: basic and acidic residues. Residues 444-460 (APGPGPASPAPPAPPPR) are compositionally biased toward pro residues. In terms of domain architecture, SH3 spans 470 to 529 (VPGRKFIAVKAHSPQGEGEIPLHRGEAVKVLSIGEGGFWEGTVKGRTGWFPADCVEEVQM). Position 482 is a phosphoserine (Ser-482). Tyr-555 is modified (phosphotyrosine). The PDZ domain occupies 570 to 664 (VAILQKRDHE…RLVMKVVSVT (95 aa)). The segment at 664 to 688 (TRKPEEDGARRRAPPPPKRAPSTTL) is disordered. The interval 677 to 684 (PPPPKRAP) is required for interaction with ABI1. Residues Ser-694, Ser-781, Ser-790, and Ser-801 each carry the phosphoserine modification. Disordered stretches follow at residues 760–1460 (QGLP…AAGP) and 1475–1524 (GDPV…SLLD). The span at 812–844 (IPPPPQTAPPPPPAPYYFDSGPPPTFSPPPPPG) shows a compositional bias: pro residues. A compositionally biased stretch (low complexity) spans 857-869 (GLEARLGAGAAGL). Phosphoserine is present on residues Ser-890 and Ser-897. Thr-912 bears the Phosphothreonine mark. A Phosphotyrosine modification is found at Tyr-930. Arg-965 is subject to Asymmetric dimethylarginine. A Phosphoserine modification is found at Ser-995. A compositionally biased stretch (basic and acidic residues) spans 1016–1026 (VKERRLEERRR). Over residues 1078-1092 (LKPLVGGPSLGPSGS) the composition is skewed to low complexity. Residues 1122–1131 (SQTPSRSPTP) are compositionally biased toward polar residues. Thr-1130 carries the phosphothreonine modification. Phosphoserine occurs at positions 1134, 1159, 1163, and 1166. Residues 1174 to 1194 (ARREAEKPPREERKSPEDKKS) show a composition bias toward basic and acidic residues. A Phosphothreonine modification is found at Thr-1234. Low complexity predominate over residues 1235–1250 (PELAPAPMQAAAVAEP). Composition is skewed to pro residues over residues 1251-1261 (MPSPRAQPPGS) and 1321-1333 (TPPP…PTTV). At Ser-1253 the chain carries Phosphoserine. Positions 1360–1370 (ADTRSSSDPHL) are enriched in basic and acidic residues. The span at 1371–1392 (ETTSTISTVSSMSTLSSESGEL) shows a compositional bias: low complexity. An SH3-binding motif is present at residues 1410 to 1416 (PPVPPKP). At Ser-1420 the chain carries Phosphoserine. Residues 1494 to 1514 (ISELSSRLQQLNKDTRSLGEE) adopt a coiled-coil conformation. Polar residues predominate over residues 1495 to 1505 (SELSSRLQQLN). Phosphoserine is present on residues Ser-1510, Ser-1521, Ser-1529, and Ser-1539. 2 disordered regions span residues 1546 to 1584 (ISAQ…PASL) and 1627 to 1663 (VRSV…QQKP). Residues 1627-1637 (VRSVSARSRSP) are compositionally biased toward low complexity. Phosphoserine occurs at positions 1634, 1636, and 1638. Residues 1638-1648 (SPSPLPSPSPG) are compositionally biased toward pro residues. The segment covering 1649–1658 (SGPSAGPRRP) has biased composition (low complexity). An SAM domain is found at 1667–1730 (WSKFDVGDWL…ERALRQLDGS (64 aa)).

The protein belongs to the SHANK family. In terms of assembly, may homomultimerize via its SAM domain. Interacts with BAIAP2, DBNL and SLC17A7/VGLUT1. Interacts with DLGAP1/GKAP, GRM1/MGLUR1, GRM5/MGLUR5 and LZTS3 C-termini via its PDZ domain. Interacts with ABI1, HOMER1, HOMER2, HOMER3 and CTTN/cortactin SH3 domain. Is part of a complex with DLG4/PSD-95 and DLGAP1/GKAP. Interacts (via PDZ domain) with the GRIA1 subunit of the AMPA receptor (via PDZ-binding motif). Interacts with WASF1 and CYFIP2; the interactions mediate the association of SHANK3 with the WAVE1 complex. Interacts with ARPC2; the interaction probably mediates the association of SHANK3 with the Arp2/3 complex. Interacts (via ANK repeats) with SHARPIN and SPTAN1. Interacts (via PDZ domain) with ARHGAP44 (probably via PDZ-binding motif); the interaction takes place in dendritic spines and promotes GRIA1 exocytosis. Interacts with CAMK2A. Interacts with DIP2A. Interacts with ADGRL3. As to expression, in brain, highly expressed in striatum, thalamus, hippocampus and granule cells of the cerebellum.

The protein resides in the cytoplasm. It is found in the synapse. It localises to the postsynaptic density. The protein localises to the cell projection. Its subcellular location is the dendritic spine. Functionally, major scaffold postsynaptic density protein which interacts with multiple proteins and complexes to orchestrate the dendritic spine and synapse formation, maturation and maintenance. Interconnects receptors of the postsynaptic membrane including NMDA-type and metabotropic glutamate receptors via complexes with GKAP/PSD-95 and HOMER, respectively, and the actin-based cytoskeleton. Plays a role in the structural and functional organization of the dendritic spine and synaptic junction through the interaction with Arp2/3 and WAVE1 complex as well as the promotion of the F-actin clusters. By way of this control of actin dynamics, participates in the regulation of developing neurons growth cone motility and the NMDA receptor-signaling. Also modulates GRIA1 exocytosis and GRM5/MGLUR5 expression and signaling to control the AMPA and metabotropic glutamate receptor-mediated synaptic transmission and plasticity. May be required at an early stage of synapse formation and be inhibited by IGF1 to promote synapse maturation. The polypeptide is SH3 and multiple ankyrin repeat domains protein 3 (Shank3) (Mus musculus (Mouse)).